The primary structure comprises 453 residues: Plasmepsin II (453 aa).

Over 1–37 the chain is Cytoplasmic; that stretch reads MDITVREHDFKHGFIKSNSTFDGLNIDNSKNKKKIQK. Residues 1-124 constitute a propeptide that is removed on maturation; it reads MDITVREHDF…SGLTKTNYLG (124 aa). The helical; Signal-anchor for type II membrane protein transmembrane segment at 38-58 threads the bilayer; the sequence is GFQILYVLLFCSVMCGLFYYV. Over 59–453 the chain is Lumenal; the sequence is YENVWLQRDN…VGIALAKKNL (395 aa). Residues 140 to 447 enclose the Peptidase A1 domain; sequence FYGDAEVGDN…DYDNQSVGIA (308 aa). Residue Asp158 is part of the active site. Cys171 and Cys176 are oxidised to a cystine. The active site involves Asp338. An intrachain disulfide couples Cys373 to Cys409.

This sequence belongs to the peptidase A1 family. Component of the hemozoin formation complex (HFC) composed of falcipains FP2A and/or FP2B, plasmepsins PMII, PMIII/HAP and PMIV, heme detoxifying protein HDP and falcilysin FLN. The HFC complex is involved in hemoglobin degradation and detoxification of heme in the food vacuole during the asexual blood stage. Not N-glycosylated. Post-translationally, proteolytically cleaved into the soluble active mature form in the digestive vacuole by cysteine protease falcipains; the process begins at the early ring stage. Proteolysis requires an acidic environment. In absence of falcipains, autoprocessing may serve as an alternate activation system.

It is found in the membrane. The protein resides in the vacuole lumen. It localises to the vacuole membrane. The catalysed reaction is Hydrolysis of the bonds linking certain hydrophobic residues in hemoglobin or globin. Also cleaves small molecules substrates such as Ala-Leu-Glu-Arg-Thr-Phe-|-Phe(NO2)-Ser-Phe-Pro-Thr.. Its activity is regulated as follows. Inhibited by pepstatin A. Inhibited by KNI derived compounds (KNI-10742, 10743, 10395, 10333, and 10343). During the asexual blood stage, participates in initial cleavage of native host hemoglobin (Hb) resulting in Hb denaturation. May cleave preferentially denatured hemoglobin that has been cleaved by PMI. Digestion of host Hb is an essential step which provides the parasite with amino acids for protein synthesis, and regulates osmolarity. The protein is Plasmepsin II of Plasmodium falciparum (isolate 3D7).